A 134-amino-acid polypeptide reads, in one-letter code: Arginine decarboxylase proenzyme (134 aa).

S82 functions as the Schiff-base intermediate with substrate; via pyruvic acid in the catalytic mechanism. The residue at position 82 (S82) is a Pyruvic acid (Ser); by autocatalysis. The Proton acceptor; for processing activity role is filled by H87. C102 functions as the Proton donor; for catalytic activity in the catalytic mechanism.

Belongs to the prokaryotic AdoMetDC family. Type 1 subfamily. As to quaternary structure, heterooctamer of four alpha and four beta chains arranged as a tetramer of alpha/beta heterodimers. Pyruvate is required as a cofactor. Is synthesized initially as an inactive proenzyme. Formation of the active enzyme involves a self-maturation process in which the active site pyruvoyl group is generated from an internal serine residue via an autocatalytic post-translational modification. Two non-identical subunits are generated from the proenzyme in this reaction, and the pyruvate is formed at the N-terminus of the alpha chain, which is derived from the carboxyl end of the proenzyme. The post-translation cleavage follows an unusual pathway, termed non-hydrolytic serinolysis, in which the side chain hydroxyl group of the serine supplies its oxygen atom to form the C-terminus of the beta chain, while the remainder of the serine residue undergoes an oxidative deamination to produce ammonia and the pyruvoyl group blocking the N-terminus of the alpha chain.

The enzyme catalyses L-arginine + H(+) = agmatine + CO2. The protein operates within amine and polyamine biosynthesis; agmatine biosynthesis; agmatine from L-arginine: step 1/1. Its activity is regulated as follows. Highly competitively inhibited by L-argininamide and L-arginine methyl ester. Also inhibited by alpha-difluoromethylarginine. Is not stimulated by potassium chloride as observed for other decarboxylases. In terms of biological role, specifically catalyzes the decarboxylation of L-arginine to agmatine. Is also able to decarboxylate L-canavanine, although less efficiently. Has no S-adenosylmethionine decarboxylase (AdoMetDC) activity. This Saccharolobus solfataricus (strain ATCC 35092 / DSM 1617 / JCM 11322 / P2) (Sulfolobus solfataricus) protein is Arginine decarboxylase proenzyme.